Reading from the N-terminus, the 159-residue chain is Small ribosomal subunit protein uS9 (159 aa).

The protein belongs to the universal ribosomal protein uS9 family.

In Methylocella silvestris (strain DSM 15510 / CIP 108128 / LMG 27833 / NCIMB 13906 / BL2), this protein is Small ribosomal subunit protein uS9.